Here is a 262-residue protein sequence, read N- to C-terminus: Hydroxyethylthiazole kinase (262 aa).

Met50 lines the substrate pocket. Residues Arg125 and Thr171 each coordinate ATP. Residue Gly198 coordinates substrate.

The protein belongs to the Thz kinase family. The cofactor is Mg(2+).

It catalyses the reaction 5-(2-hydroxyethyl)-4-methylthiazole + ATP = 4-methyl-5-(2-phosphooxyethyl)-thiazole + ADP + H(+). It functions in the pathway cofactor biosynthesis; thiamine diphosphate biosynthesis; 4-methyl-5-(2-phosphoethyl)-thiazole from 5-(2-hydroxyethyl)-4-methylthiazole: step 1/1. In terms of biological role, catalyzes the phosphorylation of the hydroxyl group of 4-methyl-5-beta-hydroxyethylthiazole (THZ). This is Hydroxyethylthiazole kinase from Escherichia coli O81 (strain ED1a).